A 106-amino-acid chain; its full sequence is Serine rich endogenous peptide 7 (106 aa).

The N-terminal stretch at 1-26 is a signal peptide; it reads MGKKCSSKFRQMLVLVLLLIVFTCLS. Composition is skewed to basic and acidic residues over residues 46 to 56 and 65 to 77; these read GIEDEGQERTH and RSVE…EGRR. The tract at residues 46-106 is disordered; sequence GIEDEGQERT…GGGRIPVAAS (61 aa). 2 consecutive short sequence motifs (SCOOP motif) follow at residues 58–72 and 86–100; these read LNSK…KTHH and GIRA…GGGR. Short sequence motifs (sxS motif essential for MIK2 binding) lie at residues 64–66 and 92–94; these read SRS and SKS.

Belongs to the serine rich endogenous peptide (SCOOP) phytocytokine family. In terms of assembly, interacts with MIK2 (via extracellular leucine-rich repeat domain); this interaction triggers the formation of complex between MIK2 and the BAK1/SERK3 and SERK4 coreceptors, and subsequent BAK1 activation by phosphorylation. Mostly expressed in roots, and, to a lower extent, in seedlings shoots.

The protein resides in the cell membrane. Its subcellular location is the secreted. It localises to the extracellular space. The protein localises to the apoplast. Functionally, brassicaceae-specific phytocytokine (plant endogenous peptide released into the apoplast) perceived by MIK2 in a BAK1/SERK3 and SERK4 coreceptors-dependent manner, that modulates various physiological and antimicrobial processes including growth prevention and reactive oxygen species (ROS) response regulation. The protein is Serine rich endogenous peptide 7 of Arabidopsis thaliana (Mouse-ear cress).